Consider the following 64-residue polypeptide: Weak toxin CM-9a (64 aa).

Disulfide bonds link cysteine 3–cysteine 24, cysteine 6–cysteine 11, cysteine 17–cysteine 41, cysteine 45–cysteine 56, and cysteine 57–cysteine 62.

This sequence belongs to the three-finger toxin family. Ancestral subfamily. Orphan group II sub-subfamily. As to expression, expressed by the venom gland.

Its subcellular location is the secreted. Functionally, binds with low affinity to muscular (alpha-1-beta-1-delta-epsilon/CHRNA1-CHRNB1-CHRND-CHRNE) and very low affinity to neuronal (alpha-7/CHRNA7) nicotinic acetylcholine receptor (nAChR). This Naja kaouthia (Monocled cobra) protein is Weak toxin CM-9a.